A 289-amino-acid chain; its full sequence is 4-diphosphocytidyl-2-C-methyl-D-erythritol kinase (289 aa).

The active site involves lysine 10. 99–109 (PMGGGLGGGSS) is a binding site for ATP. Aspartate 141 is an active-site residue.

It belongs to the GHMP kinase family. IspE subfamily. In terms of assembly, homodimer.

It carries out the reaction 4-CDP-2-C-methyl-D-erythritol + ATP = 4-CDP-2-C-methyl-D-erythritol 2-phosphate + ADP + H(+). The protein operates within isoprenoid biosynthesis; isopentenyl diphosphate biosynthesis via DXP pathway; isopentenyl diphosphate from 1-deoxy-D-xylulose 5-phosphate: step 3/6. In terms of biological role, catalyzes the phosphorylation of the position 2 hydroxy group of 4-diphosphocytidyl-2C-methyl-D-erythritol. The sequence is that of 4-diphosphocytidyl-2-C-methyl-D-erythritol kinase from Enterobacter sp. (strain 638).